The chain runs to 173 residues: MVSQRRDADAPKDSPKSILESLAGTRVLVVEARYYDDIADELLAGARAAIEAVGAEARVFTVPGALEIPAAIAILMDAGRKAGGPYDAAVALGCVIRGETGHYDIVAGESARALMDLSVAEHLPLGNGILTVETMEQALARARVSDMNKGGGAAEAALSLLAIKRAANLEPAR.

5-amino-6-(D-ribitylamino)uracil-binding positions include Y34, 65–67 (ALE), and 94–96 (CVI). 99–100 (ET) lines the (2S)-2-hydroxy-3-oxobutyl phosphate pocket. H102 serves as the catalytic Proton donor. N127 serves as a coordination point for 5-amino-6-(D-ribitylamino)uracil. A (2S)-2-hydroxy-3-oxobutyl phosphate-binding site is contributed by R141.

The protein belongs to the DMRL synthase family.

It carries out the reaction (2S)-2-hydroxy-3-oxobutyl phosphate + 5-amino-6-(D-ribitylamino)uracil = 6,7-dimethyl-8-(1-D-ribityl)lumazine + phosphate + 2 H2O + H(+). It functions in the pathway cofactor biosynthesis; riboflavin biosynthesis; riboflavin from 2-hydroxy-3-oxobutyl phosphate and 5-amino-6-(D-ribitylamino)uracil: step 1/2. Its function is as follows. Catalyzes the formation of 6,7-dimethyl-8-ribityllumazine by condensation of 5-amino-6-(D-ribitylamino)uracil with 3,4-dihydroxy-2-butanone 4-phosphate. This is the penultimate step in the biosynthesis of riboflavin. The sequence is that of 6,7-dimethyl-8-ribityllumazine synthase from Methylorubrum extorquens (strain CM4 / NCIMB 13688) (Methylobacterium extorquens).